The following is a 755-amino-acid chain: Elongation factor G, mitochondrial (755 aa).

The N-terminal 38 residues, 1 to 38, are a transit peptide targeting the mitochondrion; it reads MFKRVGLIAGIAGPVAGSSRFSAVSFSKRAFSASSKRC. The 282-residue stretch at 63-344 folds into the tr-type G domain; it reads KKLRNIGISA…AIVEYLPNPS (282 aa). Residues 72-79, 143-147, and 197-200 contribute to the GTP site; these read AHIDSGKT, DTPGH, and NKMD.

The protein belongs to the TRAFAC class translation factor GTPase superfamily. Classic translation factor GTPase family. EF-G/EF-2 subfamily.

It is found in the mitochondrion. It functions in the pathway protein biosynthesis; polypeptide chain elongation. Functionally, mitochondrial GTPase that catalyzes the GTP-dependent ribosomal translocation step during translation elongation. During this step, the ribosome changes from the pre-translocational (PRE) to the post-translocational (POST) state as the newly formed A-site-bound peptidyl-tRNA and P-site-bound deacylated tRNA move to the P and E sites, respectively. Catalyzes the coordinated movement of the two tRNA molecules, the mRNA and conformational changes in the ribosome. The sequence is that of Elongation factor G, mitochondrial from Kluyveromyces lactis (strain ATCC 8585 / CBS 2359 / DSM 70799 / NBRC 1267 / NRRL Y-1140 / WM37) (Yeast).